The following is a 234-amino-acid chain: Adenosine 5'-phosphosulfate reductase (234 aa).

[4Fe-4S] cluster contacts are provided by C120, C121, C203, and C206. C229 functions as the Nucleophile; cysteine thiosulfonate intermediate in the catalytic mechanism.

The protein belongs to the PAPS reductase family. CysH subfamily. [4Fe-4S] cluster is required as a cofactor.

It localises to the cytoplasm. It catalyses the reaction [thioredoxin]-disulfide + sulfite + AMP + 2 H(+) = adenosine 5'-phosphosulfate + [thioredoxin]-dithiol. Its pathway is sulfur metabolism; hydrogen sulfide biosynthesis; sulfite from sulfate. In terms of biological role, catalyzes the formation of sulfite from adenosine 5'-phosphosulfate (APS) using thioredoxin as an electron donor. The protein is Adenosine 5'-phosphosulfate reductase of Bacillus cereus (strain B4264).